A 249-amino-acid polypeptide reads, in one-letter code: MANDPIHQFQVSRWIPIDVGGVDLSFTNVSAFMVATVVLASGFLYLTSSGRGLIPTRLQSVSEMAYEFVATSLRDSAGSKGMKFFPFVFSLFMFVLVANFIGLFPYFYTVTSQIIVTFALSLLVIGTVIFYGFFKHGFGFLKLFVPSGVPGIIVPLVVLIEIISFLSRPISLSVRLFANMLAGHITLKVFAGFVVSLSSLGALGIGGAVLPLLMTVAITALEFLVAFLQAYVFTVLTCMYINDAVHPGH.

6 consecutive transmembrane segments (helical) span residues 26–46, 84–104, 114–134, 143–163, 185–205, and 208–228; these read FTNVSAFMVATVVLASGFLYL, FFPFVFSLFMFVLVANFIGLF, IIVTFALSLLVIGTVIFYGFF, LFVPSGVPGIIVPLVVLIEII, ITLKVFAGFVVSLSSLGALGI, and AVLPLLMTVAITALEFLVAFL.

Belongs to the ATPase A chain family. As to quaternary structure, F-type ATPases have 2 components, CF(1) - the catalytic core - and CF(0) - the membrane proton channel. CF(1) has five subunits: alpha(3), beta(3), gamma(1), delta(1), epsilon(1). CF(0) has three main subunits: a(1), b(2) and c(9-12). The alpha and beta chains form an alternating ring which encloses part of the gamma chain. CF(1) is attached to CF(0) by a central stalk formed by the gamma and epsilon chains, while a peripheral stalk is formed by the delta and b chains.

Its subcellular location is the cell inner membrane. Functionally, key component of the proton channel; it plays a direct role in the translocation of protons across the membrane. In Brucella canis (strain ATCC 23365 / NCTC 10854 / RM-666), this protein is ATP synthase subunit a.